The chain runs to 413 residues: Branched-chain-amino-acid aminotransferase 3, chloroplastic (413 aa).

The transit peptide at 1-60 directs the protein to the chloroplast; the sequence is MERAAILPSVNQNYLLCPSRAFSTRLHSSTRNLSPPSFASIKLQHSSSSVSSNGGISLTR. Lys259 carries the N6-(pyridoxal phosphate)lysine modification.

Belongs to the class-IV pyridoxal-phosphate-dependent aminotransferase family. Pyridoxal 5'-phosphate serves as cofactor. In terms of tissue distribution, expressed in the phloem cells.

Its subcellular location is the plastid. The protein resides in the chloroplast. It catalyses the reaction L-leucine + 2-oxoglutarate = 4-methyl-2-oxopentanoate + L-glutamate. It carries out the reaction L-isoleucine + 2-oxoglutarate = (S)-3-methyl-2-oxopentanoate + L-glutamate. The catalysed reaction is L-valine + 2-oxoglutarate = 3-methyl-2-oxobutanoate + L-glutamate. The enzyme catalyses a 2-oxocarboxylate + L-methionine = 4-methylsulfanyl-2-oxobutanoate + an L-alpha-amino acid. The protein operates within amino-acid biosynthesis; L-isoleucine biosynthesis; L-isoleucine from 2-oxobutanoate: step 4/4. Its pathway is amino-acid biosynthesis; L-leucine biosynthesis; L-leucine from 3-methyl-2-oxobutanoate: step 4/4. It functions in the pathway amino-acid biosynthesis; L-valine biosynthesis; L-valine from pyruvate: step 4/4. Its activity is regulated as follows. Inhibited by Ser- or Thr-derived imine. Converts 2-oxo acids to branched-chain amino acids. Acts on leucine, isoleucine and valine. Also involved in methionine chain elongation cycle of aliphatic glucosinolate formation. Catalyzes the conversion of 5-methylthiopentyl-2-oxo and 6-methylthiohexyl-2-oxo acids to their respective Met derivatives, homomethionine and dihomo-methionine, respectively. The chain is Branched-chain-amino-acid aminotransferase 3, chloroplastic from Arabidopsis thaliana (Mouse-ear cress).